Consider the following 239-residue polypeptide: Small ribosomal subunit protein uS5 (239 aa).

Residues 1–62 (MADETEIQAA…DDRRGSEEQG (62 aa)) form a disordered region. Residues 9–19 (AAAPAEAAPGA) are compositionally biased toward low complexity. Positions 34 to 62 (GGNDRGGDRGRGRDGRGRRDDRRGSEEQG) are enriched in basic and acidic residues. Residues 65 to 128 (LIEKLVHINR…AAAKKAMVRV (64 aa)) form the S5 DRBM domain.

It belongs to the universal ribosomal protein uS5 family. Part of the 30S ribosomal subunit. Contacts proteins S4 and S8.

With S4 and S12 plays an important role in translational accuracy. In terms of biological role, located at the back of the 30S subunit body where it stabilizes the conformation of the head with respect to the body. The sequence is that of Small ribosomal subunit protein uS5 from Rhizorhabdus wittichii (strain DSM 6014 / CCUG 31198 / JCM 15750 / NBRC 105917 / EY 4224 / RW1) (Sphingomonas wittichii).